A 430-amino-acid chain; its full sequence is Probable beta-1,3-galactosyl-O-glycosyl-glycoprotein beta-1,6-N-acetylglucosaminyltransferase 7 (430 aa).

Residues 1–8 (MSQLRATK) lie on the Cytoplasmic side of the membrane. Residues 9 to 25 (SGLVVRAVICIFIFLYL) traverse the membrane as a helical; Signal-anchor for type II membrane protein segment. Over 26 to 430 (RNPTPAESEE…QSHFNMRLNR (405 aa)) the chain is Extracellular. 4 disulfides stabilise this stretch: cysteine 53–cysteine 205, cysteine 139–cysteine 354, cysteine 160–cysteine 187, and cysteine 363–cysteine 395. A glycan (N-linked (GlcNAc...) asparagine) is linked at asparagine 87. Asparagine 272 is a glycosylation site (N-linked (GlcNAc...) asparagine).

The protein belongs to the glycosyltransferase 14 family.

The protein resides in the golgi apparatus membrane. Its pathway is protein modification; protein glycosylation. In terms of biological role, probable glycosyltransferase. The protein is Probable beta-1,3-galactosyl-O-glycosyl-glycoprotein beta-1,6-N-acetylglucosaminyltransferase 7 of Homo sapiens (Human).